We begin with the raw amino-acid sequence, 378 residues long: Protein RecA (378 aa).

Residue 79–86 (GPESSGKT) participates in ATP binding.

It belongs to the RecA family.

The protein resides in the cytoplasm. Can catalyze the hydrolysis of ATP in the presence of single-stranded DNA, the ATP-dependent uptake of single-stranded DNA by duplex DNA, and the ATP-dependent hybridization of homologous single-stranded DNAs. It interacts with LexA causing its activation and leading to its autocatalytic cleavage. The sequence is that of Protein RecA from Streptococcus equi subsp. zooepidemicus (strain MGCS10565).